The following is a 608-amino-acid chain: Coilin (608 aa).

Residues 134–272 (KETGGYESES…RKKAKRQWLR (139 aa)) form a disordered region. Residues 141-155 (SESEEDELEEEAEEF) show a composition bias toward acidic residues. A compositionally biased stretch (basic residues) spans 161-179 (ASKKRKTSSKNQSTKRKKC). Residues 163–170 (KKRKTSSK) carry the Nuclear localization signal 1 motif. S187 carries the phosphoserine modification. Positions 211 to 228 (DVQSANNDEQNNDSTKPM) are enriched in polar residues. The span at 235-245 (SQQEESKEHND) shows a compositional bias: basic and acidic residues. The short motif at 253–260 (TKKTPSRS) is the Nuclear localization signal 2 element. Over residues 256–269 (TPSRSARRKKAKRQ) the composition is skewed to basic residues. The 101-residue stretch at 410-510 (YEQLVAYTGS…LLDVRSVKTS (101 aa)) folds into the Tudor; atypical domain. The disordered stretch occupies residues 513-585 (DSAEVAKSAL…KKGSSSGGSW (73 aa)). The segment covering 558–585 (EALSAKKAALSQANNGWNKKGSSSGGSW) has biased composition (low complexity).

Belongs to the coilin family. As to quaternary structure, homooligomer. Interaction with RNA results in multimerization due to structural alteration in the NOD domain.

The protein localises to the nucleus. It is found in the cajal body. Its function is as follows. Probable component of nuclear coiled bodies, also known as Cajal bodies or CBs, which are involved in the modification and assembly of nucleoplasmic snRNPs. Required for CBs formation. Binds snRNAs and non-specific artificial RNA via the N-terminal part of the NOD domain and via the NLS2 region (212-282) of the IDD domain. The two sites are able to function independently and provide effective RNA-binding in a non-cooperative manner. The sequence is that of Coilin from Arabidopsis thaliana (Mouse-ear cress).